The following is a 323-amino-acid chain: Pantothenate kinase (323 aa).

Positions 1-12 (MAEQNAASTTGV) are enriched in polar residues. A disordered region spans residues 1-24 (MAEQNAASTTGVKPSPRTPDFSPY). 108–115 (GSVAVGKS) serves as a coordination point for ATP.

Belongs to the prokaryotic pantothenate kinase family.

It is found in the cytoplasm. It carries out the reaction (R)-pantothenate + ATP = (R)-4'-phosphopantothenate + ADP + H(+). Its pathway is cofactor biosynthesis; coenzyme A biosynthesis; CoA from (R)-pantothenate: step 1/5. This chain is Pantothenate kinase, found in Corynebacterium glutamicum (strain R).